Consider the following 240-residue polypeptide: Coiled-coil domain-containing protein 152 (240 aa).

A coiled-coil region spans residues 55 to 223; the sequence is MQTKEVAMKQ…LEQRLSVSKD (169 aa).

In Bos taurus (Bovine), this protein is Coiled-coil domain-containing protein 152 (CCDC152).